Here is a 90-residue protein sequence, read N- to C-terminus: Acylphosphatase (90 aa).

Positions 3–90 (QKLFIVTGHV…EQFEHFEIRR (88 aa)) constitute an Acylphosphatase-like domain. Catalysis depends on residues arginine 18 and asparagine 36.

It belongs to the acylphosphatase family.

It carries out the reaction an acyl phosphate + H2O = a carboxylate + phosphate + H(+). In Actinobacillus pleuropneumoniae serotype 5b (strain L20), this protein is Acylphosphatase (acyP).